The primary structure comprises 192 residues: LOB domain-containing protein 32 (192 aa).

In terms of domain architecture, LOB spans 4 to 105 (NRCAVCKILN…QDIESAVNEL (102 aa)).

This sequence belongs to the LOB domain-containing protein family.

The polypeptide is LOB domain-containing protein 32 (LBD32) (Arabidopsis thaliana (Mouse-ear cress)).